Reading from the N-terminus, the 588-residue chain is Transport ATP-binding protein AarD (588 aa).

Residues 24–316 (LRISMLLGVV…LGTYYHAKAQ (293 aa)) enclose the ABC transmembrane type-1 domain. The next 6 membrane-spanning stretches (helical) occupy residues 29–49 (LLGV…AVIL), 62–82 (LLTP…LTVI), 149–169 (IIPI…ALIL), 170–190 (FATA…AADA), 250–270 (SGVL…YFGF), and 276–296 (LNFG…ALIL). The ABC transporter domain occupies 350 to 583 (IEANKLEIYS…EGPFARLLAH (234 aa)). 383 to 390 (GQSGAGKS) is a binding site for ATP.

The protein belongs to the ABC transporter superfamily.

The protein localises to the cell inner membrane. In terms of biological role, somehow involved in the cytochrome D branch of aerobic respiration. Seems to be a component of a transport system. The polypeptide is Transport ATP-binding protein AarD (aarD) (Providencia stuartii).